The following is a 184-amino-acid chain: ATP synthase subunit b (184 aa).

Residues 25 to 45 (IFPSWPIMLATLVSFTILLVV) form a helical membrane-spanning segment.

It belongs to the ATPase B chain family. In terms of assembly, F-type ATPases have 2 components, F(1) - the catalytic core - and F(0) - the membrane proton channel. F(1) has five subunits: alpha(3), beta(3), gamma(1), delta(1), epsilon(1). F(0) has three main subunits: a(1), b(2) and c(10-14). The alpha and beta chains form an alternating ring which encloses part of the gamma chain. F(1) is attached to F(0) by a central stalk formed by the gamma and epsilon chains, while a peripheral stalk is formed by the delta and b chains.

The protein resides in the cell membrane. Functionally, f(1)F(0) ATP synthase produces ATP from ADP in the presence of a proton or sodium gradient. F-type ATPases consist of two structural domains, F(1) containing the extramembraneous catalytic core and F(0) containing the membrane proton channel, linked together by a central stalk and a peripheral stalk. During catalysis, ATP synthesis in the catalytic domain of F(1) is coupled via a rotary mechanism of the central stalk subunits to proton translocation. Its function is as follows. Component of the F(0) channel, it forms part of the peripheral stalk, linking F(1) to F(0). This chain is ATP synthase subunit b, found in Mycoplasma mobile (strain ATCC 43663 / 163K / NCTC 11711) (Mesomycoplasma mobile).